The chain runs to 505 residues: MFS-type transporter oryN (505 aa).

Positions 1 to 54 (MAVAELPNIVSTDSSPSPHPGSRLSSEPTDIESQKAPSNAEPKTDPNLVTWDGP) are disordered. The next 13 membrane-spanning stretches (helical) occupy residues 69-89 (AFVT…SSIF), 106-126 (VVTL…PVWG), 135-155 (KWPM…VAVA), 166-186 (FLTG…LVDM), 193-213 (GVAM…APLM), 226-246 (FTQW…VFGL), 280-300 (GIKD…VTEP), 301-321 (ILLL…LVFV), 337-357 (ISAL…AIVV), 376-396 (LPLM…FAWT), 401-421 (IHWA…YMVF), 440-460 (IGAN…FGPF), and 468-488 (AWAS…PVLF).

The protein belongs to the major facilitator superfamily. CAR1 family.

The protein localises to the membrane. MFS-type transporter; part of the gene cluster that mediates the biosynthesis of oryzines, natural products with an unusual maleidride backbone. The protein is MFS-type transporter oryN of Aspergillus oryzae (strain ATCC 42149 / RIB 40) (Yellow koji mold).